Here is a 624-residue protein sequence, read N- to C-terminus: Ubiquitin carboxyl-terminal hydrolase 16 (624 aa).

Positions 46 to 620 constitute a USP domain; that stretch reads VGLSNPANDC…EVYLLFYEIE (575 aa). Cysteine 55 serves as the catalytic Nucleophile. Residue histidine 424 is the Proton acceptor of the active site. The segment at 453–573 is disordered; that stretch reads SENPSRVASP…ATDTEASASA (121 aa). Positions 479 to 496 are enriched in low complexity; that stretch reads SPPASTSTNSPLSLTPDS. The span at 518-544 shows a compositional bias: polar residues; sequence VSFQSTHSSSKQTISPTSAARNSSSLD. The span at 546–573 shows a compositional bias: low complexity; the sequence is ARLSSPASRSSLAERNASATDTEASASA.

This sequence belongs to the peptidase C19 family.

It catalyses the reaction Thiol-dependent hydrolysis of ester, thioester, amide, peptide and isopeptide bonds formed by the C-terminal Gly of ubiquitin (a 76-residue protein attached to proteins as an intracellular targeting signal).. The protein is Ubiquitin carboxyl-terminal hydrolase 16 (ubp16) of Emericella nidulans (strain FGSC A4 / ATCC 38163 / CBS 112.46 / NRRL 194 / M139) (Aspergillus nidulans).